The chain runs to 197 residues: Thymidine kinase (197 aa).

ATP is bound by residues 15–22 and 93–96; these read GPMFAGKT and DEVQ. The Proton acceptor role is filled by Glu-94. Zn(2+) is bound by residues Cys-150, Cys-153, Cys-188, and His-191.

This sequence belongs to the thymidine kinase family. In terms of assembly, homotetramer.

It is found in the cytoplasm. It catalyses the reaction thymidine + ATP = dTMP + ADP + H(+). The chain is Thymidine kinase from Thermococcus kodakarensis (strain ATCC BAA-918 / JCM 12380 / KOD1) (Pyrococcus kodakaraensis (strain KOD1)).